The following is a 102-amino-acid chain: uncharacterized protein (102 aa).

A run of 2 helical transmembrane segments spans residues 24 to 44 (AFIV…PVLT) and 55 to 75 (IGAV…TWIL).

The protein resides in the cell membrane. This is an uncharacterized protein from Bacillus subtilis (strain 168).